A 334-amino-acid polypeptide reads, in one-letter code: Formylmethanofuran--tetrahydromethanopterin formyltransferase (334 aa).

It belongs to the FTR family. Homotetramer.

Its subcellular location is the cytoplasm. It catalyses the reaction N-formylmethanofuran + 5,6,7,8-tetrahydromethanopterin + H(+) = N(5)-formyl-5,6,7,8-tetrahydromethanopterin + methanofuran. It participates in one-carbon metabolism; formaldehyde degradation; formate from formaldehyde (H(4)MPT route): step 4/5. Functionally, catalyzes the transfer of a formyl group from 5-formyl tetrahydromethanopterin (5-formyl-H(4)MPT) to methanofuran (MFR) to produce formylmethanofuran (formyl-MFR) and tetrahydromethanopterin (H(4)MPT). The sequence is that of Formylmethanofuran--tetrahydromethanopterin formyltransferase from Rhodopirellula baltica (strain DSM 10527 / NCIMB 13988 / SH1).